A 395-amino-acid chain; its full sequence is 8-amino-7-oxononanoate synthase (395 aa).

Substrate is bound at residue R24. Position 111-112 (111-112 (GF)) interacts with pyridoxal 5'-phosphate. H136 provides a ligand contact to substrate. Pyridoxal 5'-phosphate contacts are provided by residues S184, 209–212 (DDAH), and 240–243 (TLSK). Position 243 is an N6-(pyridoxal phosphate)lysine (K243). Substrate is bound at residue T357.

The protein belongs to the class-II pyridoxal-phosphate-dependent aminotransferase family. BioF subfamily. As to quaternary structure, homodimer. It depends on pyridoxal 5'-phosphate as a cofactor.

It catalyses the reaction 6-carboxyhexanoyl-[ACP] + L-alanine + H(+) = (8S)-8-amino-7-oxononanoate + holo-[ACP] + CO2. The protein operates within cofactor biosynthesis; biotin biosynthesis. In terms of biological role, catalyzes the decarboxylative condensation of pimeloyl-[acyl-carrier protein] and L-alanine to produce 8-amino-7-oxononanoate (AON), [acyl-carrier protein], and carbon dioxide. The chain is 8-amino-7-oxononanoate synthase from Alkaliphilus metalliredigens (strain QYMF).